The chain runs to 451 residues: MRECISIHVGQAGVQIGNACWELYCLEHGIQPSGQMPSDKAVGGKDDSFNTFFSETGSGKHVPRAVFVDLEPTVVDEIRTGLYRQLFHPEQLITGKEDAANNYARGHYTIGKEHIDLVLDRVRKLSDQCTGLQGFLIFHSFGGGTGSGFTSLLMERLSVDYGKKSKLEFSIYPAPQVATAVVEPYNSILTTHTTLEHSDCAFMVDNEAIYDICKRNLDIERPSYTNLNRLISQVVSSITASLRFDGALNVDLTEFQTNLVPYPRIHFPLVTYAPIISAEKAYHEQLAVAEVTSACFEPANQMVKCDPRHGKYMACCMLYRGDVVPKDVNAAIATIKTKRSIQFVDWCPTGFKVGINYQPPTVVPGGDLAKVQRAVCMLSNTTAVAEAWARLDHKFDLMYAKRAFVHWYVGEGMEEGEFSEAREDLAALEKDYEEVGLDTFEAEEEEGGDEY.

Gln-11 lines the GTP pocket. Lys-40 carries the N6-acetyllysine modification. 7 residues coordinate GTP: Glu-71, Ser-140, Gly-144, Thr-145, Thr-179, Asn-206, and Asn-228. Glu-71 is a Mg(2+) binding site. Residue Glu-254 is part of the active site.

This sequence belongs to the tubulin family. In terms of assembly, dimer of alpha and beta chains. A typical microtubule is a hollow water-filled tube with an outer diameter of 25 nm and an inner diameter of 15 nM. Alpha-beta heterodimers associate head-to-tail to form protofilaments running lengthwise along the microtubule wall with the beta-tubulin subunit facing the microtubule plus end conferring a structural polarity. Microtubules usually have 13 protofilaments but different protofilament numbers can be found in some organisms and specialized cells. It depends on Mg(2+) as a cofactor. Post-translationally, undergoes a tyrosination/detyrosination cycle, the cyclic removal and re-addition of a C-terminal tyrosine residue by the enzymes tubulin tyrosine carboxypeptidase (TTCP) and tubulin tyrosine ligase (TTL), respectively. Acetylation of alpha chains at Lys-40 stabilizes microtubules and affects affinity and processivity of microtubule motors. This modification has a role in multiple cellular functions, ranging from cell motility, cell cycle progression or cell differentiation to intracellular trafficking and signaling. In terms of tissue distribution, actively expressed in the lens but does not seem to be lens-specific.

Its subcellular location is the cytoplasm. It is found in the cytoskeleton. It catalyses the reaction GTP + H2O = GDP + phosphate + H(+). Tubulin is the major constituent of microtubules, a cylinder consisting of laterally associated linear protofilaments composed of alpha- and beta-tubulin heterodimers. Microtubules grow by the addition of GTP-tubulin dimers to the microtubule end, where a stabilizing cap forms. Below the cap, tubulin dimers are in GDP-bound state, owing to GTPase activity of alpha-tubulin. In Enteroctopus dofleini (North Pacific giant octopus), this protein is Tubulin alpha chain.